A 264-amino-acid polypeptide reads, in one-letter code: Thymidylate synthase (264 aa).

Arg21 lines the dUMP pocket. His51 provides a ligand contact to (6R)-5,10-methylene-5,6,7,8-tetrahydrofolate. 126–127 (RR) provides a ligand contact to dUMP. Cys146 serves as the catalytic Nucleophile. Residues 166 to 169 (RSAD), Asn177, and 207 to 209 (HLY) each bind dUMP. Asp169 lines the (6R)-5,10-methylene-5,6,7,8-tetrahydrofolate pocket. Ala263 contacts (6R)-5,10-methylene-5,6,7,8-tetrahydrofolate.

Belongs to the thymidylate synthase family. Bacterial-type ThyA subfamily. In terms of assembly, homodimer.

The protein resides in the cytoplasm. The catalysed reaction is dUMP + (6R)-5,10-methylene-5,6,7,8-tetrahydrofolate = 7,8-dihydrofolate + dTMP. The protein operates within pyrimidine metabolism; dTTP biosynthesis. In terms of biological role, catalyzes the reductive methylation of 2'-deoxyuridine-5'-monophosphate (dUMP) to 2'-deoxythymidine-5'-monophosphate (dTMP) while utilizing 5,10-methylenetetrahydrofolate (mTHF) as the methyl donor and reductant in the reaction, yielding dihydrofolate (DHF) as a by-product. This enzymatic reaction provides an intracellular de novo source of dTMP, an essential precursor for DNA biosynthesis. The sequence is that of Thymidylate synthase from Rhizobium johnstonii (strain DSM 114642 / LMG 32736 / 3841) (Rhizobium leguminosarum bv. viciae).